Reading from the N-terminus, the 255-residue chain is Segregation and condensation protein A (255 aa).

This sequence belongs to the ScpA family. As to quaternary structure, component of a cohesin-like complex composed of ScpA, ScpB and the Smc homodimer, in which ScpA and ScpB bind to the head domain of Smc. The presence of the three proteins is required for the association of the complex with DNA.

Its subcellular location is the cytoplasm. Its function is as follows. Participates in chromosomal partition during cell division. May act via the formation of a condensin-like complex containing Smc and ScpB that pull DNA away from mid-cell into both cell halves. This chain is Segregation and condensation protein A, found in Lactiplantibacillus plantarum (strain ATCC BAA-793 / NCIMB 8826 / WCFS1) (Lactobacillus plantarum).